Reading from the N-terminus, the 1518-residue chain is WD repeat-containing protein 62 (1518 aa).

An N-acetylalanine modification is found at Ala-2. Ser-33 is modified (phosphoserine). Thr-46 is modified (phosphothreonine). Position 49 is a phosphoserine (Ser-49). Thr-50 carries the phosphothreonine modification. Ser-52 carries the post-translational modification Phosphoserine. WD repeat units follow at residues 109-150 (TARK…QVAE), 153-194 (GHKY…VVAS), 196-234 (KVSC…ETKV), 291-330 (INLK…YLAN), 357-396 (AVYP…RVGK), 402-450 (FHSS…DSHW), 490-529 (DVKA…ELVK), 532-574 (AHDA…NLEQ), 578-618 (DHSS…DGLH), 626-665 (AEKT…QKKC), 671-713 (GDEG…KMFG), and 714-752 (HSEI…TNCM). Ser-501 bears the Phosphoserine mark. Residues 762-772 (RQQQQHTNDKK) are compositionally biased toward basic and acidic residues. 2 disordered regions span residues 762-824 (RQQQ…DPDP) and 908-935 (ASLL…KESS). A compositionally biased stretch (polar residues) spans 781 to 790 (TYVSTPSEIH). Positions 797-809 (QTEDDLEEECEPE) are enriched in acidic residues. One copy of the WD 13 repeat lies at 803–846 (EEECEPEEMLKTPSKDSLDPDPRCLLTNGKLPLWAKRLLGDDDV). A compositionally biased stretch (basic and acidic residues) spans 810 to 824 (EMLKTPSKDSLDPDP). A compositionally biased stretch (low complexity) spans 908-920 (ASLLSESESPQEA). Ser-944 carries the phosphoserine modification. Residues 962-1055 (EVEAGPGDQQ…PSSSLPQTPE (94 aa)) form a disordered region. Composition is skewed to polar residues over residues 971 to 981 (QGDSYLRVSSD) and 1045 to 1054 (VPSSSLPQTP). Position 1053 is a phosphothreonine (Thr-1053). Phosphoserine is present on residues Ser-1070, Ser-1093, Ser-1101, Ser-1123, Ser-1144, Ser-1228, Ser-1248, and Ser-1249. A WD 14 repeat occupies 1132–1173 (GGSQPRAGTGYASPDRTHVLAAGKAEETLEAWRPPPPCLTSL). A WD 15 repeat occupies 1255–1293 (SLGQELQAITTATTPSLDSEGQEPALRSWGNHEARANLR). Thr-1268 carries the phosphothreonine modification. The segment at 1339-1377 (FRPSLPAPESPGLPAHPSNPQLPEARPGIPGGTASLLEP) is disordered.

As to quaternary structure, can form homodimers (via C-terminus). Interacts (via C-terminus) with MAPKBP1 (via C-terminus). Interacts with CDK5RAP2, CEP152, CEP63 and KIAA0753. CEP63, CDK5RAP2, CEP152, WDR62 are proposed to form a stepwise assembled complex at the centrosome forming a ring near parental centrioles. In terms of tissue distribution, present in fetal brain, enriched within the ventricular and subventricular zone (at protein level). In the embryonic brain it is expressed in mitotic neural precursor cells.

It localises to the nucleus. It is found in the cytoplasm. The protein resides in the cytoskeleton. Its subcellular location is the spindle pole. The protein localises to the microtubule organizing center. It localises to the centrosome. It is found in the centriole. Its function is as follows. Required for cerebral cortical development. Plays a role in neuronal proliferation and migration. Plays a role in mother-centriole-dependent centriole duplication; the function also seems to involve CEP152, CDK5RAP2 and CEP63 through a stepwise assembled complex at the centrosome that recruits CDK2 required for centriole duplication. This Homo sapiens (Human) protein is WD repeat-containing protein 62 (WDR62).